A 695-amino-acid polypeptide reads, in one-letter code: Threonine--tRNA ligase 1, cytoplasmic (695 aa).

The disordered stretch occupies residues 1–21; that stretch reads MSEEKASSPSGKMDGEKPLNP. The 65-residue stretch at 51–115 folds into the TGS domain; sequence DSKPIKVTLP…ETDCTLELLK (65 aa). The residue at position 215 (K215) is an N6-acetyllysine. A Phosphothreonine modification is found at T218. Position 270 is a phosphotyrosine (Y270). Position 425 is a phosphothreonine (T425).

Belongs to the class-II aminoacyl-tRNA synthetase family. As to quaternary structure, homodimer. Post-translationally, ISGylated.

It is found in the cytoplasm. The catalysed reaction is tRNA(Thr) + L-threonine + ATP = L-threonyl-tRNA(Thr) + AMP + diphosphate + H(+). Its function is as follows. Catalyzes the attachment of threonine to tRNA(Thr) in a two-step reaction: threonine is first activated by ATP to form Thr-AMP and then transferred to the acceptor end of tRNA(Thr). Also edits incorrectly charged tRNA(Thr) via its editing domain, at the post-transfer stage. The chain is Threonine--tRNA ligase 1, cytoplasmic (Tars1) from Rattus norvegicus (Rat).